The primary structure comprises 270 residues: Putative pyruvate, phosphate dikinase regulatory protein (270 aa).

148–155 (GISRTSKT) is an ADP binding site.

The protein belongs to the pyruvate, phosphate/water dikinase regulatory protein family. PDRP subfamily.

The catalysed reaction is N(tele)-phospho-L-histidyl/L-threonyl-[pyruvate, phosphate dikinase] + ADP = N(tele)-phospho-L-histidyl/O-phospho-L-threonyl-[pyruvate, phosphate dikinase] + AMP + H(+). It carries out the reaction N(tele)-phospho-L-histidyl/O-phospho-L-threonyl-[pyruvate, phosphate dikinase] + phosphate + H(+) = N(tele)-phospho-L-histidyl/L-threonyl-[pyruvate, phosphate dikinase] + diphosphate. Bifunctional serine/threonine kinase and phosphorylase involved in the regulation of the pyruvate, phosphate dikinase (PPDK) by catalyzing its phosphorylation/dephosphorylation. In Bacillus cereus (strain AH187), this protein is Putative pyruvate, phosphate dikinase regulatory protein.